Here is a 315-residue protein sequence, read N- to C-terminus: Thioredoxin reductase (315 aa).

Residue 45-52 coordinates FAD; sequence EGSTPGGK. Residues cysteine 145 and cysteine 148 are joined by a disulfide bond. 288-297 contributes to the FAD binding site; it reads DCRSKHFRQI.

It belongs to the class-II pyridine nucleotide-disulfide oxidoreductase family. In terms of assembly, homodimer. Requires FAD as cofactor.

The protein localises to the cytoplasm. The catalysed reaction is [thioredoxin]-dithiol + NADP(+) = [thioredoxin]-disulfide + NADPH + H(+). The polypeptide is Thioredoxin reductase (trxB) (Mycoplasma pneumoniae (strain ATCC 29342 / M129 / Subtype 1) (Mycoplasmoides pneumoniae)).